The primary structure comprises 83 residues: Small ribosomal subunit protein bS18A (83 aa).

It belongs to the bacterial ribosomal protein bS18 family. Part of the 30S ribosomal subunit. Forms a tight heterodimer with protein bS6.

Functionally, binds as a heterodimer with protein bS6 to the central domain of the 16S rRNA, where it helps stabilize the platform of the 30S subunit. The sequence is that of Small ribosomal subunit protein bS18A from Mycolicibacterium vanbaalenii (strain DSM 7251 / JCM 13017 / BCRC 16820 / KCTC 9966 / NRRL B-24157 / PYR-1) (Mycobacterium vanbaalenii).